Here is a 124-residue protein sequence, read N- to C-terminus: Photoactive yellow protein (124 aa).

The region spanning 22–85 is the PAS domain; sequence AEYLPFGAVL…GEFLRFHQTG (64 aa). An S-(4-hydroxycinnamyl)cysteine modification is found at Cys-68.

Belongs to the photoactive yellow protein family. Post-translationally, the 4-hydroxycinnamic acid (p-coumaric acid) chromophore is covalently bound via a thioester linkage.

In terms of biological role, this photoactive protein is a photoreceptor with kinetics similar to that of rhodopsin. This is Photoactive yellow protein (pyp) from Cereibacter sphaeroides (strain ATCC 17023 / DSM 158 / JCM 6121 / CCUG 31486 / LMG 2827 / NBRC 12203 / NCIMB 8253 / ATH 2.4.1.) (Rhodobacter sphaeroides).